The chain runs to 627 residues: Pentatricopeptide repeat-containing protein At2g35030, mitochondrial (627 aa).

Residues 1 to 44 (MQSRALSRLRSYYKRSSVFPSSDNDRSVQLFNLVRSIYSSSSRP) constitute a mitochondrion transit peptide. 14 PPR repeats span residues 45–75 (RVPQPEWLIGELCKVGKIAEARKLFDGLPER), 76–110 (DVVTWTHVITGYIKLGDMREARELFDRVDSRKNVV), 111–138 (TWTAMVSGYLRSKQLSIAEMLFQEMPER), 139–173 (NVVSWNTMIDGYAQSGRIDKALELFDEMPERNIVS), 174–200 (WNSMVKALVQRGRIDEAMNLFERMPRR), 201–235 (DVVSWTAMVDGLAKNGKVDEARRLFDCMPERNIIS), 236–262 (WNAMITGYAQNNRIDEADQLFQVMPER), 263–293 (DFASWNTMITGFIRNREMNKACGLFDRMPEK), 294–328 (NVISWTTMITGYVENKENEEALNVFSKMLRDGSVK), 330–360 (NVGTYVSILSACSDLAGLVEGQQIHQLISKS), 365–396 (NEIVTSALLNMYSKSGELIAARKMFDNGLVCQ), 398–432 (DLISWNSMIAVYAHHGHGKEAIEMYNQMRKHGFKP), 433–467 (SAVTYLNLLFACSHAGLVEKGMEFFKDLVRDESLP), and 469–499 (REEHYTCLVDLCGRAGRLKDVTNFINCDDAR). The segment at 504–579 (FYGAILSACN…QPGCSWVKVG (76 aa)) is type E motif. Residues 580–610 (KQNHLFVVGDKSHPQFEALDSILSDLRNKMR) are type E(+) motif.

This sequence belongs to the PPR family. PCMP-E subfamily.

It is found in the mitochondrion. The polypeptide is Pentatricopeptide repeat-containing protein At2g35030, mitochondrial (PCMP-E15) (Arabidopsis thaliana (Mouse-ear cress)).